The following is a 33-amino-acid chain: MSDIN-like toxin proprotein 5 (33 aa).

Residues 1–10 (MSDINATRLP) constitute a propeptide that is removed on maturation. The cyclopeptide (Ile-Pro) cross-link spans 11 to 18 (IFWFIYFP). A propeptide spanning residues 19 to 32 (CVGDNVDNTLTRGE) is cleaved from the precursor.

This sequence belongs to the MSDIN fungal toxin family. Processed by the macrocyclase-peptidase enzyme POPB to yield a toxic cyclic octapeptide. POPB first removes 10 residues from the N-terminus. Conformational trapping of the remaining peptide forces the enzyme to release this intermediate rather than proceed to macrocyclization. The enzyme rebinds the remaining peptide in a different conformation and catalyzes macrocyclization of the N-terminal 8 residues.

In terms of biological role, probable toxin that belongs to the MSDIN-like toxin family responsible for a large number of food poisoning cases and deaths. The polypeptide is MSDIN-like toxin proprotein 5 (Amanita phalloides (Death cap)).